Here is a 279-residue protein sequence, read N- to C-terminus: MLVIGSGAKHLEGEIKEKAPITNVEIKKFPDGEKYVRILEKGDKAIVVQSTYKPQDEFLIEALLLGDALRENGYRKLKIVIPYMAYSRQDRVTKEGEPISIRAVLKMLGLYYDELYVMDIHNPKTLEFFPGRAENILPSKEIAEYFSDKLGEGIILAPDKGALERAKAIAEILGLEYSHFEKKRISPTEVQMTPVNIDVKGKNVLIVDDIISTGGTMIKATEILRKLGAEKVFVAATHGVFAEGAIERLSKAVDELAVTNTIPTPVSKISIVPEILNLL.

Residues 31 to 33 and 88 to 89 each bind ATP; these read DGE and RQ. H121 and D159 together coordinate Mg(2+). The active site involves K182. D-ribose 5-phosphate is bound by residues R184, D208, and 212–216; that span reads STGGT.

The protein belongs to the ribose-phosphate pyrophosphokinase family. Class III (archaeal) subfamily. Mg(2+) serves as cofactor.

The protein localises to the cytoplasm. The enzyme catalyses D-ribose 5-phosphate + ATP = 5-phospho-alpha-D-ribose 1-diphosphate + AMP + H(+). The protein operates within metabolic intermediate biosynthesis; 5-phospho-alpha-D-ribose 1-diphosphate biosynthesis; 5-phospho-alpha-D-ribose 1-diphosphate from D-ribose 5-phosphate (route I): step 1/1. Involved in the biosynthesis of the central metabolite phospho-alpha-D-ribosyl-1-pyrophosphate (PRPP) via the transfer of pyrophosphoryl group from ATP to 1-hydroxyl of ribose-5-phosphate (Rib-5-P). The sequence is that of Ribose-phosphate pyrophosphokinase from Pyrococcus furiosus (strain ATCC 43587 / DSM 3638 / JCM 8422 / Vc1).